Consider the following 384-residue polypeptide: S-adenosylmethionine synthase (384 aa).

Residue His15 participates in ATP binding. Mg(2+) is bound at residue Asp17. Glu43 is a K(+) binding site. Residues Glu56 and Gln99 each contribute to the L-methionine site. The flexible loop stretch occupies residues 99-109; that stretch reads QSPDINQGVDR. ATP contacts are provided by residues 164 to 166, 230 to 231, Asp239, 245 to 246, Ala262, and Lys266; these read DAK, RF, and RK. Asp239 lines the L-methionine pocket. Lys270 contacts L-methionine.

It belongs to the AdoMet synthase family. In terms of assembly, homotetramer; dimer of dimers. Mg(2+) is required as a cofactor. It depends on K(+) as a cofactor.

The protein resides in the cytoplasm. The catalysed reaction is L-methionine + ATP + H2O = S-adenosyl-L-methionine + phosphate + diphosphate. It participates in amino-acid biosynthesis; S-adenosyl-L-methionine biosynthesis; S-adenosyl-L-methionine from L-methionine: step 1/1. In terms of biological role, catalyzes the formation of S-adenosylmethionine (AdoMet) from methionine and ATP. The overall synthetic reaction is composed of two sequential steps, AdoMet formation and the subsequent tripolyphosphate hydrolysis which occurs prior to release of AdoMet from the enzyme. This Shigella boydii serotype 18 (strain CDC 3083-94 / BS512) protein is S-adenosylmethionine synthase.